Reading from the N-terminus, the 282-residue chain is Pantothenate synthetase (282 aa).

26-33 (MGNLHEGH) contributes to the ATP binding site. His33 (proton donor) is an active-site residue. Gln57 provides a ligand contact to (R)-pantoate. Gln57 provides a ligand contact to beta-alanine. 148 to 151 (GKKD) lines the ATP pocket. (R)-pantoate is bound at residue Gln154. 185 to 188 (LSSR) contacts ATP.

Belongs to the pantothenate synthetase family. In terms of assembly, homodimer.

Its subcellular location is the cytoplasm. It carries out the reaction (R)-pantoate + beta-alanine + ATP = (R)-pantothenate + AMP + diphosphate + H(+). Its pathway is cofactor biosynthesis; (R)-pantothenate biosynthesis; (R)-pantothenate from (R)-pantoate and beta-alanine: step 1/1. Catalyzes the condensation of pantoate with beta-alanine in an ATP-dependent reaction via a pantoyl-adenylate intermediate. The protein is Pantothenate synthetase of Paracidovorax citrulli (strain AAC00-1) (Acidovorax citrulli).